We begin with the raw amino-acid sequence, 358 residues long: Alanine racemase (358 aa).

K35 serves as the catalytic Proton acceptor; specific for D-alanine. N6-(pyridoxal phosphate)lysine is present on K35. R130 is a binding site for substrate. The active-site Proton acceptor; specific for L-alanine is Y255. M303 contributes to the substrate binding site.

The protein belongs to the alanine racemase family. Pyridoxal 5'-phosphate is required as a cofactor.

It carries out the reaction L-alanine = D-alanine. It functions in the pathway amino-acid biosynthesis; D-alanine biosynthesis; D-alanine from L-alanine: step 1/1. Its function is as follows. Catalyzes the interconversion of L-alanine and D-alanine. May also act on other amino acids. The polypeptide is Alanine racemase (alr) (Shewanella baltica (strain OS223)).